A 354-amino-acid chain; its full sequence is Uroporphyrinogen decarboxylase (354 aa).

Residues 25–29 (RQAGR), aspartate 75, tyrosine 152, threonine 207, and histidine 330 each bind substrate.

The protein belongs to the uroporphyrinogen decarboxylase family. Homodimer.

Its subcellular location is the cytoplasm. The catalysed reaction is uroporphyrinogen III + 4 H(+) = coproporphyrinogen III + 4 CO2. Its pathway is porphyrin-containing compound metabolism; protoporphyrin-IX biosynthesis; coproporphyrinogen-III from 5-aminolevulinate: step 4/4. In terms of biological role, catalyzes the decarboxylation of four acetate groups of uroporphyrinogen-III to yield coproporphyrinogen-III. The protein is Uroporphyrinogen decarboxylase of Xanthomonas campestris pv. campestris (strain 8004).